A 193-amino-acid chain; its full sequence is Ribonuclease HII (193 aa).

The RNase H type-2 domain occupies 3–192; that stretch reads SLVAGIDEVG…VRAVIDRSSA (190 aa). The a divalent metal cation site is built by aspartate 9, glutamate 10, and aspartate 101.

It belongs to the RNase HII family. Mn(2+) is required as a cofactor. The cofactor is Mg(2+).

It is found in the cytoplasm. It catalyses the reaction Endonucleolytic cleavage to 5'-phosphomonoester.. Its function is as follows. Endonuclease that specifically degrades the RNA of RNA-DNA hybrids. The chain is Ribonuclease HII from Methylococcus capsulatus (strain ATCC 33009 / NCIMB 11132 / Bath).